The sequence spans 325 residues: Ribonucleoside-diphosphate reductase small chain (325 aa).

Fe cation-binding residues include D76, E107, and H110. Y114 is an active-site residue. Residues E170, E204, and H207 each contribute to the Fe cation site.

It belongs to the ribonucleoside diphosphate reductase small chain family. Heterodimer of a large and a small subunit. It depends on Fe cation as a cofactor.

It catalyses the reaction a 2'-deoxyribonucleoside 5'-diphosphate + [thioredoxin]-disulfide + H2O = a ribonucleoside 5'-diphosphate + [thioredoxin]-dithiol. Functionally, provides the precursors necessary for DNA synthesis. Catalyzes the biosynthesis of deoxyribonucleotides from the corresponding ribonucleotides. The polypeptide is Ribonucleoside-diphosphate reductase small chain (Encephalitozoon cuniculi (strain GB-M1) (Microsporidian parasite)).